The following is a 472-amino-acid chain: MKDTIVLYPNIGRGHLVSMVELGKLILTHHPSLSITILILTPSTTPSTTTFACDSNAQYIATVTATIPAITFHHVPLATLPSNTPSLPPHLVSLELARHSTQNVAVAFQTLAKASNLKAIIIDLLNFNDPKTLTQNLNKNIHTYFYYTSGASTLALLLHYPTIHETLTKNYVKDQPLQIQIPGLRANITTDDFAKDSKDPSNYSSQAFLKIAETMRGSFGIIINTFEAIEEELIRALSEDGTVPPLFCIGPVISAPYGEDDKGCLSWLDSQPSQSVVLLCFGSMGSFSRTQLKEIAVGLEKSEQRFLWVVRAELDCADSVDEQPSLDELMPGGFLERTKEKGLVVRDWAPQVQILSHDSVGGFVTHCGWNSVLEAVCEGVPMAAWPLYAEQRVNRVIMVEDMKVALAVNEDKAGFVSATELGDRVRELMESDKGKEIRQRTFKMKISAAEAMAEGGTSRVALDKLAKLWKES.

Residues Ser283, 348–349, 366–374, and 388–391 contribute to the UDP-alpha-D-glucose site; these read WA, HCGWNSVLE, and YAEQ.

Belongs to the UDP-glycosyltransferase family. In terms of tissue distribution, highly expressed in roots. Expressed in leaves and stems.

In terms of biological role, glycosyltransferase that possesses isoflavonoids 4'-O- and 7-O-glucosyltransferase activities. Shows a successive glucosylation toward the acceptors producing their corresponding 4',7-O-diglucosides. Can use genistein, formononetin, daidzein, liquiritigenin and naringenin as substrates. Also shows a 3'-O-glucosylation activity in vitro. The chain is UDP-glycosyltransferase 2 from Pueraria montana var. lobata (Kudzu vine).